The following is a 207-amino-acid chain: Ras-related protein Rab-7a (207 aa).

Thr-2 carries the post-translational modification N-acetylthreonine. The GTP site is built by Ser-17, Gly-18, Val-19, Gly-20, Lys-21, Thr-22, Ser-23, Ser-34, Asn-35, Tyr-37, and Thr-40. Thr-22 is a binding site for Mg(2+). Positions 28–41 (YVNKKFSNQYKATI) match the Switch 1 motif. Mg(2+)-binding residues include Thr-40 and Asp-63. Residue Gly-66 participates in GTP binding. The Switch 2 motif lies at 67-82 (QERFQSLGVAFYRGAD). Ser-72 is subject to Phosphoserine. GTP contacts are provided by Asn-125, Lys-126, Asp-128, Ala-156, and Lys-157. Glycyl lysine isopeptide (Lys-Gly) (interchain with G-Cter in ubiquitin) cross-links involve residues Lys-191 and Lys-194. Residues Cys-205 and Cys-207 are each lipidated (S-geranylgeranyl cysteine). Cys-207 carries the post-translational modification Cysteine methyl ester.

The protein belongs to the small GTPase superfamily. Rab family. Interacts with NTRK1/TRKA. Interacts with RILP. Interacts with PSMA7. Interacts with RNF115. Interacts with and FYCO1. Interacts with the PIK3C3/VPS34-PIK3R4 complex. The GTP-bound form interacts with OSBPL1A. The GTP-bound form interacts with RAC1. Interacts with CLN3. Interacts with CHM, the substrate-binding subunit of the Rab geranylgeranyltransferase complex. Interacts with C9orf72. Does not interact with HPS4 and the BLOC-3 complex (heterodimer of HPS1 and HPS4). Interacts with CLN5. Interacts with PLEKHM1 (via N- and C-terminus). Interacts with PRPH; the interaction is direct. Interacts with VPS13A. The GDP-bound form interacts with RIMOC1. Interacts with the MON1A-CCZ1B complex and this interaction is enhanced in the presence of RIMOC1. Interacts with VPS39 and VPS41. Forms a ternary complex with LAMP2 and RUFY4; the interaction with LAMP2 is mediated by RUFY4 (via RUN and coiled coil domains). Requires Mg(2+) as cofactor. In terms of processing, deubiquitination at Lys-191 and Lys-194 by USP32. Post-translationally, phosphorylated at Ser-72 by LRRK1; phosphorylation is dependent on protein kinase C (PKC) activation of LRRK1. Prenylated. Prenylation is required for association with cellular membranes. As to expression, expressed in osteoclasts and in neurons.

The protein resides in the cytoplasmic vesicle. Its subcellular location is the phagosome membrane. It localises to the late endosome membrane. It is found in the lysosome membrane. The protein localises to the melanosome membrane. The protein resides in the autophagosome membrane. Its subcellular location is the lipid droplet. It localises to the endosome membrane. It is found in the mitochondrion membrane. The enzyme catalyses GTP + H2O = GDP + phosphate + H(+). Regulated by guanine nucleotide exchange factors (GEFs) which promote the exchange of bound GDP for free GTP. Regulated by GTPase activating proteins (GAPs) which increase the GTP hydrolysis activity. Inhibited by GDP dissociation inhibitors (GDIs). Functionally, the small GTPases Rab are key regulators of intracellular membrane trafficking, from the formation of transport vesicles to their fusion with membranes. Rabs cycle between an inactive GDP-bound form and an active GTP-bound form that is able to recruit to membranes different sets of downstream effectors directly responsible for vesicle formation, movement, tethering and fusion. In its active state, RAB7A binds to a variety of effector proteins playing a key role in the regulation of endo-lysosomal trafficking. Governs early-to-late endosomal maturation, microtubule minus-end as well as plus-end directed endosomal migration and positioning, and endosome-lysosome transport through different protein-protein interaction cascades. Also plays a central role in growth-factor-mediated cell signaling, nutrient-transporter-mediated nutrient uptake, neurotrophin transport in the axons of neurons and lipid metabolism. Also involved in regulation of some specialized endosomal membrane trafficking, such as maturation of melanosomes, pathogen-induced phagosomes (or vacuoles) and autophagosomes. Plays a role in the maturation and acidification of phagosomes that engulf pathogens, such as S.aureus and Mycobacteria. Plays a role in the fusion of phagosomes with lysosomes. In concert with RAC1, plays a role in regulating the formation of RBs (ruffled borders) in osteoclasts. Controls the endosomal trafficking and neurite outgrowth signaling of NTRK1/TRKA. Regulates the endocytic trafficking of the EGF-EGFR complex by regulating its lysosomal degradation. Involved in the ADRB2-stimulated lipolysis through lipophagy, a cytosolic lipase-independent autophagic pathway. Required for the exosomal release of SDCBP, CD63 and syndecan. Required for vesicular trafficking and cell surface expression of ACE2. May play a role in PRPH neuronal intermediate filament assembly. The protein is Ras-related protein Rab-7a of Rattus norvegicus (Rat).